Reading from the N-terminus, the 122-residue chain is Holo-[acyl-carrier-protein] synthase (122 aa).

Residues Asp-9 and Glu-58 each contribute to the Mg(2+) site.

The protein belongs to the P-Pant transferase superfamily. AcpS family. Requires Mg(2+) as cofactor.

The protein localises to the cytoplasm. It catalyses the reaction apo-[ACP] + CoA = holo-[ACP] + adenosine 3',5'-bisphosphate + H(+). Its function is as follows. Transfers the 4'-phosphopantetheine moiety from coenzyme A to a Ser of acyl-carrier-protein. The protein is Holo-[acyl-carrier-protein] synthase of Chlamydia caviae (strain ATCC VR-813 / DSM 19441 / 03DC25 / GPIC) (Chlamydophila caviae).